We begin with the raw amino-acid sequence, 314 residues long: tRNA dimethylallyltransferase 1 (314 aa).

8–15 contacts ATP; sequence GPTGTGKS. Position 10-15 (10-15) interacts with substrate; that stretch reads TGTGKS.

The protein belongs to the IPP transferase family. As to quaternary structure, monomer. The cofactor is Mg(2+).

The enzyme catalyses adenosine(37) in tRNA + dimethylallyl diphosphate = N(6)-dimethylallyladenosine(37) in tRNA + diphosphate. Its function is as follows. Catalyzes the transfer of a dimethylallyl group onto the adenine at position 37 in tRNAs that read codons beginning with uridine, leading to the formation of N6-(dimethylallyl)adenosine (i(6)A). This is tRNA dimethylallyltransferase 1 from Mycobacterium marinum (strain ATCC BAA-535 / M).